The following is a 997-amino-acid chain: Burkholderia TALE-like protein 2 (997 aa).

One copy of the Cryptic repeat -1 repeat lies at 19–50; it reads LSPLERIKIEKHYGGGATLAFISNQHDELAQV. The stretch at 51–83 is one Cryptic repeat 0 repeat; sequence LSRADILKIASYDCAAQALQAVLDCGPMLGKRG. Core repeat repeat units follow at residues 84–116, 117–147, 148–180, 181–213, 214–244, 245–277, 278–310, 311–343, 344–376, 377–409, 410–442, 443–475, 476–508, 509–539, 540–572, 573–605, 606–638, 639–671, 672–704, 705–737, 738–770, 771–803, 804–836, 837–869, 870–902, 903–935, and 936–967; these read FSRA…GKRG, FSQV…GERG, FSRG…RERG, FNQA…GKRG, FSRV…RKRG, FHPT…RERG, FSQA…CERG, FSQP…RERG, FSQA…HERG, FSQA…RERG, VRQA…RERG, FNQA…DKRG, FNPT…RERG, FNQA…RERG, FSQP…HKRG, FGQP…RERG, FSQS…RESD, FRQA…RQRG, FNRA…DERG, FNLT…QQRG, FNLT…RQRG, FNLI…RQRD, and LSLI…MQAG. The segment at 84–967 is buD domain; it reads FSRADIVRIA…KYGPVLMQAG (884 aa). ANK repeat units lie at residues 772–801, 805–834, 838–867, and 871–900; these read RQAD…RLRQ, NRAS…TLDE, NLTN…TLQQ, and NLTD…TLRQ. Residues 968–997 form a Cryptic repeat +1 repeat; that stretch reads RSNEEIVHVAARRGGAGRIRKMVALLLERQ.

This sequence belongs to the transcription activator-like effector (TALE) family. Bat subfamily.

Its function is as follows. Binds to DNA in a sequence-specific manner. This chain is Burkholderia TALE-like protein 2, found in Mycetohabitans rhizoxinica (strain DSM 19002 / CIP 109453 / HKI 454) (Paraburkholderia rhizoxinica).